A 474-amino-acid chain; its full sequence is PTS system N-acetylmuramic acid-specific EIIBC component (474 aa).

Positions 1-89 (MAKEISSELL…SELLGEAPVQ (89 aa)) constitute a PTS EIIB type-1 domain. The Cytoplasmic portion of the chain corresponds to 1–123 (MAKEISSELL…LAKFATIFTP (123 aa)). Catalysis depends on cysteine 29, which acts as the Phosphocysteine intermediate; for EIIB activity. The PTS EIIC type-1 domain maps to 115-474 (AKFATIFTPL…LFGCRNVNLD (360 aa)). Residues 124–144 (LIPGFIAAGLLLGIATLIATV) form a helical membrane-spanning segment. The Periplasmic segment spans residues 145–157 (MHVPADAQGTLPD). Residues 158-178 (ALNFMKVFSKGLFTFLVILVG) form a helical membrane-spanning segment. The Cytoplasmic segment spans residues 179 to 180 (YN). A helical transmembrane segment spans residues 181–201 (AAQAFGGTGVNGAIIAALFLL). Topologically, residues 202–217 (GYNPAATTGYYAGFHD) are periplasmic. The helical transmembrane segment at 218–238 (FFGLPIDPRGNIIGVLIAAWA) threads the bilayer. At 239-260 (CARIEGMVRRFMPDDLDMLLTS) the chain is on the cytoplasmic side. The chain crosses the membrane as a helical span at residues 261 to 281 (LITLLITATLAYLIIMPLGGW). Over 282–301 (LFEGMSWLFMHLNSNPLGCA) the chain is Periplasmic. A helical membrane pass occupies residues 302–322 (VLAGLFLIAVVFGVHQGFIPV). Residues 323-334 (YLALMDSQGFNS) are Cytoplasmic-facing. The helical transmembrane segment at 335–355 (LFPILSMAGAGQVGAALALYW) threads the bilayer. Topologically, residues 356-368 (RAQPHSGLRSQVR) are periplasmic. Residues 369-389 (GAIIPGLLGVGEPLIYGVTLP) form a helical membrane-spanning segment. Over 390–393 (RMKP) the chain is Cytoplasmic. A helical transmembrane segment spans residues 394 to 414 (FITACLGGAAGGLFIGLIAWW). Residues 415-440 (GLPMGLNSAFGPSGLVALPLMTSAQG) lie on the Periplasmic side of the membrane. A helical membrane pass occupies residues 441–461 (ILPAMAIYAGGILVAWVCGFI). Over 462–474 (FTTLFGCRNVNLD) the chain is Cytoplasmic.

Its subcellular location is the cell inner membrane. The catalysed reaction is N-acetyl-beta-D-muramate(out) + N(pros)-phospho-L-histidyl-[protein] = N-acetyl-beta-D-muramate 6-phosphate(in) + L-histidyl-[protein]. In terms of biological role, the phosphoenolpyruvate-dependent sugar phosphotransferase system (sugar PTS), a major carbohydrate active transport system, catalyzes the phosphorylation of incoming sugar substrates concomitantly with their translocation across the cell membrane. This system is involved in N-acetylmuramic acid (MurNAc) transport, yielding cytoplasmic MurNAc-6-P. Is also able to take up anhydro-N-acetylmuramic acid (anhMurNAc), but cannot phosphorylate the carbon 6, probably because of the 1,6-anhydro ring. In Shigella dysenteriae serotype 1 (strain Sd197), this protein is PTS system N-acetylmuramic acid-specific EIIBC component (murP).